Reading from the N-terminus, the 302-residue chain is Arginase (302 aa).

4 residues coordinate Mn(2+): His-103, Asp-126, His-128, and Asp-130. Residues 128–132, 139–141, and Asp-180 contribute to the substrate site; these read HGDLN and SGN. Mn(2+) is bound by residues Asp-229 and Asp-231. Substrate contacts are provided by Thr-243 and Glu-274.

This sequence belongs to the arginase family. It depends on Mn(2+) as a cofactor.

It catalyses the reaction L-arginine + H2O = urea + L-ornithine. It functions in the pathway nitrogen metabolism; urea cycle; L-ornithine and urea from L-arginine: step 1/1. This is Arginase (arg) from Staphylococcus aureus (strain MSSA476).